The sequence spans 488 residues: Lysine--tRNA ligase (488 aa).

Mg(2+) contacts are provided by E398 and E405.

The protein belongs to the class-II aminoacyl-tRNA synthetase family. As to quaternary structure, homodimer. Mg(2+) serves as cofactor.

Its subcellular location is the cytoplasm. It catalyses the reaction tRNA(Lys) + L-lysine + ATP = L-lysyl-tRNA(Lys) + AMP + diphosphate. The chain is Lysine--tRNA ligase from Carboxydothermus hydrogenoformans (strain ATCC BAA-161 / DSM 6008 / Z-2901).